The sequence spans 191 residues: Small ribosomal subunit protein uS5 (191 aa).

The tract at residues 1–20 (MAGERERGGRERSRDREERD) is disordered. The S5 DRBM domain occupies 23–86 (FVDKLVHINR…ESAKRNLTRV (64 aa)).

This sequence belongs to the universal ribosomal protein uS5 family. Part of the 30S ribosomal subunit. Contacts proteins S4 and S8.

In terms of biological role, with S4 and S12 plays an important role in translational accuracy. Functionally, located at the back of the 30S subunit body where it stabilizes the conformation of the head with respect to the body. This chain is Small ribosomal subunit protein uS5, found in Nitrobacter winogradskyi (strain ATCC 25391 / DSM 10237 / CIP 104748 / NCIMB 11846 / Nb-255).